We begin with the raw amino-acid sequence, 281 residues long: Phosphate import ATP-binding protein PstB 1 (281 aa).

The interval 1–34 (MTENTAETADESSDGGVTATTGAATTTPTTPPEP) is disordered. A compositionally biased stretch (low complexity) spans 15–28 (GGVTATTGAATTTP). The ABC transporter domain maps to 36-276 (IRARDLDVFY…PEHQRVEEYI (241 aa)). 68–75 (GPSGCGKS) lines the ATP pocket.

Belongs to the ABC transporter superfamily. Phosphate importer (TC 3.A.1.7) family. In terms of assembly, the complex is composed of two ATP-binding proteins (PstB), two transmembrane proteins (PstC and PstA) and a solute-binding protein (PstS).

The protein localises to the cell membrane. The catalysed reaction is phosphate(out) + ATP + H2O = ADP + 2 phosphate(in) + H(+). Functionally, part of the ABC transporter complex PstSACB involved in phosphate import. Responsible for energy coupling to the transport system. This chain is Phosphate import ATP-binding protein PstB 1, found in Halobacterium salinarum (strain ATCC 700922 / JCM 11081 / NRC-1) (Halobacterium halobium).